The sequence spans 245 residues: Proteasome subunit alpha type-7-1B (245 aa).

The protein belongs to the peptidase T1A family. In terms of assembly, the 26S proteasome consists of a 20S proteasome core and two 19S regulatory subunits. The 20S proteasome core is composed of 28 subunits that are arranged in four stacked rings, resulting in a barrel-shaped structure. The two end rings are each formed by seven alpha subunits, and the two central rings are each formed by seven beta subunits. The catalytic chamber with the active sites is on the inside of the barrel. Testis specific.

It localises to the cytoplasm. Its subcellular location is the nucleus. Functionally, the proteasome is a multicatalytic proteinase complex which is characterized by its ability to cleave peptides with Arg, Phe, Tyr, Leu, and Glu adjacent to the leaving group at neutral or slightly basic pH. The proteasome has an ATP-dependent proteolytic activity. The polypeptide is Proteasome subunit alpha type-7-1B (Pros28.1B) (Drosophila virilis (Fruit fly)).